A 230-amino-acid chain; its full sequence is 2,3-bisphosphoglycerate-dependent phosphoglycerate mutase (230 aa).

Substrate-binding positions include 8-15 (RHGQSEWN), 21-22 (TG), R60, 87-90 (ERHY), K98, 114-115 (RR), and 183-184 (GN). The active-site Tele-phosphohistidine intermediate is the H9. E87 (proton donor/acceptor) is an active-site residue.

It belongs to the phosphoglycerate mutase family. BPG-dependent PGAM subfamily.

The catalysed reaction is (2R)-2-phosphoglycerate = (2R)-3-phosphoglycerate. The protein operates within carbohydrate degradation; glycolysis; pyruvate from D-glyceraldehyde 3-phosphate: step 3/5. Functionally, catalyzes the interconversion of 2-phosphoglycerate and 3-phosphoglycerate. The protein is 2,3-bisphosphoglycerate-dependent phosphoglycerate mutase of Lactobacillus acidophilus (strain ATCC 700396 / NCK56 / N2 / NCFM).